The sequence spans 371 residues: Glyco-Gag protein (371 aa).

Topologically, residues 1–51 are cytoplasmic; that stretch reads MSGASSGTAIGAHLFGVSPEYRVLIGDEGAGPSKSLSEVSFSVWYRSRAAR. The helical transmembrane segment at 52-72 threads the bilayer; sequence LVILCLVASFLVPCLTFLIAE. The Extracellular portion of the chain corresponds to 73-371; that stretch reads AVMGQTVTTP…NVIDETFPLT (299 aa). A glycan (N-linked (GlcNAc...) asparagine; by host) is linked at Asn-134. Disordered stretches follow at residues 171-281 and 350-371; these read VRPF…NNRP and VPGEDGRPTQLPNVIDETFPLT. Residues 174–193 are compositionally biased toward pro residues; it reads FLPPPKPPTPLPQPLSPQPS. Residues 194–203 show a composition bias toward low complexity; the sequence is APLTSSLYPV. 2 stretches are compositionally biased toward pro residues: residues 204 to 220 and 230 to 245; these read VPKPDPPKPPVLPPDPS and EPPPYPGGHGPPPSGP.

In terms of processing, glycosylated by host. Post-translationally, cleaved by host near the middle of the molecule, releasing the c-terminal half containing capsid and nucleoprotein domains op GAG.

It localises to the host cell membrane. Its function is as follows. Plays a role in viral particle release. Presumably acts by facilitating the fission of the virion bud at the cell surface. The sequence is that of Glyco-Gag protein from Feline sarcoma virus (strain Snyder-Theilen).